A 229-amino-acid polypeptide reads, in one-letter code: ABC transporter I family member 1 (229 aa).

The ABC transporter domain occupies 11–228 (LLLQNVSCMR…LIDMLDRADI (218 aa)). 43–50 (GTNGSGKS) serves as a coordination point for ATP.

The protein belongs to the ABC transporter superfamily. ABCI family.

It localises to the membrane. The catalysed reaction is heme b(in) + ATP + H2O = heme b(out) + ADP + phosphate + H(+). Its function is as follows. Part of the ABC transporter complex CcmAB involved in the biogenesis of c-type cytochromes; once thought to export heme, this seems not to be the case, but its exact role is uncertain. Responsible for energy coupling to the transport system. This Arabidopsis thaliana (Mouse-ear cress) protein is ABC transporter I family member 1 (ABCI1).